The following is a 169-amino-acid chain: Protein GrpE (169 aa).

The disordered stretch occupies residues 1–25 (MSEEKQNGQIQEETVENSENQNNEL). The segment covering 7–23 (NGQIQEETVENSENQNN) has biased composition (polar residues).

The protein belongs to the GrpE family. In terms of assembly, homodimer.

It is found in the cytoplasm. In terms of biological role, participates actively in the response to hyperosmotic and heat shock by preventing the aggregation of stress-denatured proteins, in association with DnaK and GrpE. It is the nucleotide exchange factor for DnaK and may function as a thermosensor. Unfolded proteins bind initially to DnaJ; upon interaction with the DnaJ-bound protein, DnaK hydrolyzes its bound ATP, resulting in the formation of a stable complex. GrpE releases ADP from DnaK; ATP binding to DnaK triggers the release of the substrate protein, thus completing the reaction cycle. Several rounds of ATP-dependent interactions between DnaJ, DnaK and GrpE are required for fully efficient folding. This chain is Protein GrpE, found in Campylobacter lari (strain RM2100 / D67 / ATCC BAA-1060).